The chain runs to 342 residues: Heparan sulfate glucosamine 3-O-sulfotransferase 6 (342 aa).

The disordered stretch occupies residues 1–21 (MAGSGGLGGGAGGGQGAGAGQ). The Cytoplasmic segment spans residues 1–31 (MAGSGGLGGGAGGGQGAGAGQGAALRASRAP). Residues 32-49 (MLLVALVLGAYCLCALPG) traverse the membrane as a helical; Signal-anchor for type II membrane protein segment. The Lumenal portion of the chain corresponds to 50 to 342 (RCPPAARAPA…QMTGQDFGWG (293 aa)). The segment at 55–85 (ARAPAPAPAPSEPSSSVHRPGAPGLPLASGP) is disordered. Residues 66-85 (EPSSSVHRPGAPGLPLASGP) show a composition bias toward low complexity. 100–104 (KGGTR) is a 3'-phosphoadenylyl sulfate binding site. Residues 122 to 128 (EPHFFDR) and 153 to 156 (KTPS) each bind substrate. The 3'-phosphoadenylyl sulfate site is built by Arg-181 and Ser-189. 220–221 (WS) serves as a coordination point for substrate. An N-linked (GlcNAc...) asparagine glycan is attached at Asn-281. Cys-288 and Cys-300 are oxidised to a cystine. Residue 305 to 309 (KGRPH) participates in 3'-phosphoadenylyl sulfate binding.

It belongs to the sulfotransferase 1 family.

The protein resides in the golgi apparatus membrane. It carries out the reaction alpha-D-glucosaminyl-[heparan sulfate](n) + 3'-phosphoadenylyl sulfate = 3-sulfo-alpha-D-glucosaminyl-[heparan sulfate](n) + adenosine 3',5'-bisphosphate + H(+). In terms of biological role, sulfotransferase that utilizes 3'-phospho-5'-adenylyl sulfate (PAPS) to catalyze the transfer of a sulfo group to heparan sulfate. The substrate-specific O-sulfation generates an enzyme-modified heparan sulfate which acts as a binding receptor to Herpes Simplex Virus-1 (HSV-1) and permits its entry. Unlike 3-OST-1, does not convert non-anticoagulant heparan sulfate to anticoagulant heparan sulfate. The sequence is that of Heparan sulfate glucosamine 3-O-sulfotransferase 6 (HS3ST6) from Homo sapiens (Human).